A 176-amino-acid chain; its full sequence is Translation initiation factor IF-3 (176 aa).

The protein belongs to the IF-3 family. As to quaternary structure, monomer.

It is found in the cytoplasm. Functionally, IF-3 binds to the 30S ribosomal subunit and shifts the equilibrium between 70S ribosomes and their 50S and 30S subunits in favor of the free subunits, thus enhancing the availability of 30S subunits on which protein synthesis initiation begins. This Nitratidesulfovibrio vulgaris (strain DSM 19637 / Miyazaki F) (Desulfovibrio vulgaris) protein is Translation initiation factor IF-3.